The chain runs to 339 residues: Vomeronasal type-1 receptor A14 (339 aa).

Residues 1–42 (MMGVQICQGMMSEIPFFSPPPQFSYMMNKNIRLHTDSNIRNT) lie on the Extracellular side of the membrane. Residues 43-63 (FFTDIGIGISANSLLLLFNIF) traverse the membrane as a helical segment. At 64–75 (KLTRGQRSRLTD) the chain is on the cytoplasmic side. Residues 76–96 (LPIGLLSLINLLMLLMAAFIA) traverse the membrane as a helical segment. Topologically, residues 97–119 (TDTFISWKGWDDIICKFLVYLYR) are extracellular. Cys111 and Cys198 form a disulfide bridge. A helical membrane pass occupies residues 120 to 140 (TFRGLSLCTSCLLSVLQAIIL). The Cytoplasmic segment spans residues 141 to 160 (SPRSSCLAKFKHKPPHHISC). The helical transmembrane segment at 161 to 181 (AILSLSVLYMFIGSHLLVSII) threads the bilayer. Residues 182 to 213 (ATPNLTTNDFIHVTQSCSILPMSYLMQCMFST) lie on the Extracellular side of the membrane. The N-linked (GlcNAc...) asparagine glycan is linked to Asn185. Residues 214 to 234 (LLAIRDVFLISLMVLSTWYMV) form a helical membrane-spanning segment. Topologically, residues 235–264 (ALLCRHRKQTRHLQGTSLSPKASPEQRATR) are cytoplasmic. A helical transmembrane segment spans residues 265–285 (SILMLMSLFVLMSVFDSIVCS). Over 286-296 (SRTMYLNDPIS) the chain is Extracellular. A helical membrane pass occupies residues 297–317 (YSIQLFMVHIYATVSPFVFIV). Residues 318 to 339 (TEKHIVNFLRSVCEGDECLNIH) lie on the Cytoplasmic side of the membrane.

Belongs to the G-protein coupled receptor 1 family.

It is found in the cell membrane. Functionally, putative pheromone receptor implicated in the regulation of social as well as reproductive behavior. The protein is Vomeronasal type-1 receptor A14 of Rattus norvegicus (Rat).